A 273-amino-acid polypeptide reads, in one-letter code: Phosphatidylglycerol--prolipoprotein diacylglyceryl transferase (273 aa).

7 consecutive transmembrane segments (helical) span residues 21–41 (ISVR…LWLA), 60–80 (LLFA…VLFY), 95–115 (VWTG…AMLW), 124–144 (FFGV…MGRM), 176–196 (SQLY…NWFI), 203–223 (GSVS…VEYV), and 236–256 (FISM…LMMV). R143 is an a 1,2-diacyl-sn-glycero-3-phospho-(1'-sn-glycerol) binding site.

This sequence belongs to the Lgt family.

Its subcellular location is the cell inner membrane. The enzyme catalyses L-cysteinyl-[prolipoprotein] + a 1,2-diacyl-sn-glycero-3-phospho-(1'-sn-glycerol) = an S-1,2-diacyl-sn-glyceryl-L-cysteinyl-[prolipoprotein] + sn-glycerol 1-phosphate + H(+). It participates in protein modification; lipoprotein biosynthesis (diacylglyceryl transfer). Functionally, catalyzes the transfer of the diacylglyceryl group from phosphatidylglycerol to the sulfhydryl group of the N-terminal cysteine of a prolipoprotein, the first step in the formation of mature lipoproteins. The sequence is that of Phosphatidylglycerol--prolipoprotein diacylglyceryl transferase from Vibrio atlanticus (strain LGP32) (Vibrio splendidus (strain Mel32)).